Reading from the N-terminus, the 301-residue chain is MTQNRVRTVFLLAHTGRPAAIRSAELVVKGLLRAGIGVRVLEAEARDLPLPGEVELVGEATPQCLDGCELLIVLGGDGTLLRGAEFARASGVPMLGVNLGRVGFLAEAERDDLDKVVDRVVNRAYEVEERMTVDVVVHRNGDIVHTDWALNEAAVQKAGAEKLLEVVLEIDGRPVTGFGCDGIVLSTPTGSTAYAFSAGGPVVWPEVEALLMVPISAHALFAKPLVTSPDSVLAVEVLPHVPPGVLWCDGRRTVELPPGARVEVRRGAVPVRLARLHHASFTDRLVAKFALPVSGWRGAPH.

Catalysis depends on Asp77, which acts as the Proton acceptor. Residues 77–78 (DG), Arg82, 151–152 (NE), Lys162, Asp181, and 192–197 (TAYAFS) each bind NAD(+).

This sequence belongs to the NAD kinase family. It depends on a divalent metal cation as a cofactor.

Its subcellular location is the cytoplasm. The enzyme catalyses NAD(+) + ATP = ADP + NADP(+) + H(+). Functionally, involved in the regulation of the intracellular balance of NAD and NADP, and is a key enzyme in the biosynthesis of NADP. Catalyzes specifically the phosphorylation on 2'-hydroxyl of the adenosine moiety of NAD to yield NADP. This chain is NAD kinase 2, found in Streptomyces coelicolor (strain ATCC BAA-471 / A3(2) / M145).